The sequence spans 590 residues: Arginine--tRNA ligase (590 aa).

The 'HIGH' region signature appears at 138 to 148 (ANPTGPLHIGH).

Belongs to the class-I aminoacyl-tRNA synthetase family. In terms of assembly, monomer.

Its subcellular location is the cytoplasm. The enzyme catalyses tRNA(Arg) + L-arginine + ATP = L-arginyl-tRNA(Arg) + AMP + diphosphate. This chain is Arginine--tRNA ligase, found in Orientia tsutsugamushi (strain Ikeda) (Rickettsia tsutsugamushi).